The following is a 431-amino-acid chain: tRNA(Ile)-lysidine synthase (431 aa).

Position 19–24 (19–24) interacts with ATP; the sequence is STGIDS.

This sequence belongs to the tRNA(Ile)-lysidine synthase family.

It localises to the cytoplasm. It catalyses the reaction cytidine(34) in tRNA(Ile2) + L-lysine + ATP = lysidine(34) in tRNA(Ile2) + AMP + diphosphate + H(+). In terms of biological role, ligates lysine onto the cytidine present at position 34 of the AUA codon-specific tRNA(Ile) that contains the anticodon CAU, in an ATP-dependent manner. Cytidine is converted to lysidine, thus changing the amino acid specificity of the tRNA from methionine to isoleucine. This is tRNA(Ile)-lysidine synthase from Staphylococcus aureus (strain Mu50 / ATCC 700699).